Reading from the N-terminus, the 591-residue chain is Aspartate--tRNA(Asp/Asn) ligase (591 aa).

Position 170 (glutamate 170) interacts with L-aspartate. Residues glutamine 194 to lysine 197 form an aspartate region. Arginine 216 lines the L-aspartate pocket. Residues arginine 216–glutamate 218 and glutamine 225 each bind ATP. Histidine 448 contacts L-aspartate. An ATP-binding site is contributed by glutamate 482. L-aspartate is bound at residue arginine 489. Glycine 534–arginine 537 contacts ATP. Residues glycine 559–histidine 591 form a disordered region. The segment covering glutamine 574–histidine 591 has biased composition (basic and acidic residues).

It belongs to the class-II aminoacyl-tRNA synthetase family. Type 1 subfamily. Homodimer.

It is found in the cytoplasm. It catalyses the reaction tRNA(Asx) + L-aspartate + ATP = L-aspartyl-tRNA(Asx) + AMP + diphosphate. Aspartyl-tRNA synthetase with relaxed tRNA specificity since it is able to aspartylate not only its cognate tRNA(Asp) but also tRNA(Asn). Reaction proceeds in two steps: L-aspartate is first activated by ATP to form Asp-AMP and then transferred to the acceptor end of tRNA(Asp/Asn). The protein is Aspartate--tRNA(Asp/Asn) ligase of Mycolicibacterium paratuberculosis (strain ATCC BAA-968 / K-10) (Mycobacterium paratuberculosis).